Reading from the N-terminus, the 168-residue chain is Nicotinamide-nucleotide adenylyltransferase (168 aa).

ATP is bound by residues arginine 8, phenylalanine 9, histidine 13, histidine 16, phenylalanine 119, arginine 121, tyrosine 124, glycine 126, threonine 127, and arginine 130.

The protein belongs to the archaeal NMN adenylyltransferase family. Homohexamer existing as a trimer of dimers.

The protein resides in the cytoplasm. It catalyses the reaction beta-nicotinamide D-ribonucleotide + ATP + H(+) = diphosphate + NAD(+). It functions in the pathway cofactor biosynthesis; NAD(+) biosynthesis; NAD(+) from nicotinamide D-ribonucleotide: step 1/1. In terms of biological role, catalyzes the formation of NAD(+) from nicotinamide mononucleotide (NMN) and ATP. The chain is Nicotinamide-nucleotide adenylyltransferase from Methanocaldococcus jannaschii (strain ATCC 43067 / DSM 2661 / JAL-1 / JCM 10045 / NBRC 100440) (Methanococcus jannaschii).